Reading from the N-terminus, the 441-residue chain is Cysteine--tRNA ligase (441 aa).

A Zn(2+)-binding site is contributed by cysteine 24. Residues 26-36 carry the 'HIGH' region motif; the sequence is PTVYNYIHIGN. The Zn(2+) site is built by cysteine 204, histidine 230, and glutamate 234. The short motif at 262–266 is the 'KMSKS' region element; that stretch reads KMSKS. Lysine 265 contributes to the ATP binding site.

The protein belongs to the class-I aminoacyl-tRNA synthetase family. Monomer. Zn(2+) is required as a cofactor.

The protein resides in the cytoplasm. It catalyses the reaction tRNA(Cys) + L-cysteine + ATP = L-cysteinyl-tRNA(Cys) + AMP + diphosphate. In Mycoplasma mycoides subsp. mycoides SC (strain CCUG 32753 / NCTC 10114 / PG1), this protein is Cysteine--tRNA ligase.